Consider the following 141-residue polypeptide: Nucleoside diphosphate kinase (141 aa).

Residues lysine 11, phenylalanine 59, arginine 87, threonine 93, arginine 104, and asparagine 114 each contribute to the ATP site. Histidine 117 serves as the catalytic Pros-phosphohistidine intermediate.

This sequence belongs to the NDK family. In terms of assembly, homotetramer. Requires Mg(2+) as cofactor.

Its subcellular location is the cytoplasm. The catalysed reaction is a 2'-deoxyribonucleoside 5'-diphosphate + ATP = a 2'-deoxyribonucleoside 5'-triphosphate + ADP. It catalyses the reaction a ribonucleoside 5'-diphosphate + ATP = a ribonucleoside 5'-triphosphate + ADP. Its function is as follows. Major role in the synthesis of nucleoside triphosphates other than ATP. The ATP gamma phosphate is transferred to the NDP beta phosphate via a ping-pong mechanism, using a phosphorylated active-site intermediate. The protein is Nucleoside diphosphate kinase of Bordetella bronchiseptica (strain ATCC BAA-588 / NCTC 13252 / RB50) (Alcaligenes bronchisepticus).